The primary structure comprises 251 residues: Pyrroloquinoline-quinone synthase (251 aa).

This sequence belongs to the PqqC family.

The catalysed reaction is 6-(2-amino-2-carboxyethyl)-7,8-dioxo-1,2,3,4,7,8-hexahydroquinoline-2,4-dicarboxylate + 3 O2 = pyrroloquinoline quinone + 2 H2O2 + 2 H2O + H(+). The protein operates within cofactor biosynthesis; pyrroloquinoline quinone biosynthesis. Functionally, ring cyclization and eight-electron oxidation of 3a-(2-amino-2-carboxyethyl)-4,5-dioxo-4,5,6,7,8,9-hexahydroquinoline-7,9-dicarboxylic-acid to PQQ. The sequence is that of Pyrroloquinoline-quinone synthase from Pseudomonas syringae pv. tomato (strain ATCC BAA-871 / DC3000).